Consider the following 271-residue polypeptide: Probable diacyglycerol O-acyltransferase tgs3 (271 aa).

It belongs to the long-chain O-acyltransferase family.

The enzyme catalyses an acyl-CoA + a 1,2-diacyl-sn-glycerol = a triacyl-sn-glycerol + CoA. It functions in the pathway glycerolipid metabolism; triacylglycerol biosynthesis. In terms of biological role, catalyzes the terminal and only committed step in triacylglycerol synthesis by using diacylglycerol and fatty acyl CoA as substrates. Required for storage lipid synthesis. The protein is Probable diacyglycerol O-acyltransferase tgs3 (tgs3) of Mycobacterium tuberculosis (strain CDC 1551 / Oshkosh).